The following is a 262-amino-acid chain: Acyl-coenzyme A diphosphatase FITM2 (262 aa).

The Cytoplasmic segment spans residues methionine 1–tyrosine 23. Residues leucine 24–leucine 44 traverse the membrane as a helical segment. Topologically, residues proline 45 to asparagine 57 are lumenal. Residues valine 58–leucine 78 form a helical membrane-spanning segment. Over threonine 79–arginine 93 the chain is Cytoplasmic. Residues leucine 94–isoleucine 114 form a helical membrane-spanning segment. At glutamate 115–glycine 145 the chain is on the lumenal side. A helical transmembrane segment spans residues phenylalanine 146–isoleucine 166. The active site involves histidine 155. The Cytoplasmic portion of the chain corresponds to valine 167–threonine 190. Residues leucine 191 to valine 211 form a helical membrane-spanning segment. At tyrosine 212–glutamine 218 the chain is on the lumenal side. Histidine 214 is a catalytic residue. A helical membrane pass occupies residues lysine 219 to leucine 239. Topologically, residues lysine 240 to lysine 262 are cytoplasmic.

The protein belongs to the FIT family. FIT2 subfamily.

It localises to the endoplasmic reticulum membrane. The enzyme catalyses an acyl-CoA + H2O = an acyl-4'-phosphopantetheine + adenosine 3',5'-bisphosphate + 2 H(+). It catalyses the reaction (9Z)-octadecenoyl-CoA + H2O = S-(9Z-octadecenoyl)-4'-phosphopantetheine + adenosine 3',5'-bisphosphate + 2 H(+). It carries out the reaction (5Z,8Z,11Z,14Z)-eicosatetraenoyl-CoA + H2O = S-(5Z,8Z,11Z,14Z-eicosatetraenoyl)-4'-phosphopantetheine + adenosine 3',5'-bisphosphate + 2 H(+). The catalysed reaction is hexadecanoyl-CoA + H2O = S-hexadecanoyl-4'-phosphopantetheine + adenosine 3',5'-bisphosphate + 2 H(+). Fatty acyl-coenzyme A (CoA) diphosphatase that hydrolyzes fatty acyl-CoA to yield acyl-4'-phosphopantetheine and adenosine 3',5'-bisphosphate. Preferentially hydrolyzes unsaturated long-chain acyl-CoA substrates such as oleoyl-CoA/(9Z)-octadecenoyl-CoA and arachidonoyl-CoA/(5Z,8Z,11Z,14Z)-eicosatetraenoyl-CoA in the endoplasmic reticulum (ER) lumen. This catalytic activity is required for maintaining ER structure and for lipid droplets (LDs) biogenesis, which are lipid storage organelles involved in maintaining lipid and energy homeostasis. Directly binds to diacylglycerol (DAGs) and triacylglycerol, which is also important for LD biogenesis. May support directional budding of nacent LDs from the ER into the cytosol by reducing DAG levels at sites of LD formation. Plays a role in the regulation of cell morphology and cytoskeletal organization. This chain is Acyl-coenzyme A diphosphatase FITM2, found in Bos taurus (Bovine).